Here is a 591-residue protein sequence, read N- to C-terminus: Formate--tetrahydrofolate ligase (591 aa).

Position 74–81 (74–81 (TPLGEGKS)) interacts with ATP.

It belongs to the formate--tetrahydrofolate ligase family.

It catalyses the reaction (6S)-5,6,7,8-tetrahydrofolate + formate + ATP = (6R)-10-formyltetrahydrofolate + ADP + phosphate. It functions in the pathway one-carbon metabolism; tetrahydrofolate interconversion. The sequence is that of Formate--tetrahydrofolate ligase from Lawsonia intracellularis (strain PHE/MN1-00).